Consider the following 259-residue polypeptide: Phosphatidylglycerol--prolipoprotein diacylglyceryl transferase (259 aa).

4 helical membrane passes run 16-36, 55-75, 92-112, and 117-137; these read FAIS…WFYA, FITY…VLLY, QGGM…YLFC, and VNFL…LFLG. Position 138 (Arg-138) interacts with a 1,2-diacyl-sn-glycero-3-phospho-(1'-sn-glycerol). A run of 3 helical transmembrane segments spans residues 172 to 192, 201 to 221, and 228 to 248; these read QLYE…YATF, ALNL…IEIF, and IGFI…MLIL.

It belongs to the Lgt family.

It is found in the cell inner membrane. The catalysed reaction is L-cysteinyl-[prolipoprotein] + a 1,2-diacyl-sn-glycero-3-phospho-(1'-sn-glycerol) = an S-1,2-diacyl-sn-glyceryl-L-cysteinyl-[prolipoprotein] + sn-glycerol 1-phosphate + H(+). It participates in protein modification; lipoprotein biosynthesis (diacylglyceryl transfer). Catalyzes the transfer of the diacylglyceryl group from phosphatidylglycerol to the sulfhydryl group of the N-terminal cysteine of a prolipoprotein, the first step in the formation of mature lipoproteins. The chain is Phosphatidylglycerol--prolipoprotein diacylglyceryl transferase from Rickettsia canadensis (strain McKiel).